A 193-amino-acid chain; its full sequence is MVATGSLSSKNPASISELLDGGYHPGSLLSDFDYWDYVVPEPNLNEVVFEETTCQNLVKMLENCLSRSKQTKLGCSKVLVPEKLTQRIAQDVLRLSSTEPCGLRGCVMHVNLEIENVCKKLDRIVCDASVVPTFELTLVFKQESCPWTSLKDFFFSRGRFSSGLKRTLILSSGFRLVKKKLYSLIGTTVIEEC.

The protein belongs to the DDIT4 family.

It is found in the cytoplasm. Functionally, inhibits cell growth by regulating the TOR signaling pathway upstream of the TSC1-TSC2 complex and downstream of AKT1. The polypeptide is DNA damage-inducible transcript 4-like protein (Ddit4l) (Mus musculus (Mouse)).